The primary structure comprises 1112 residues: Rho GTPase-activating protein 7 (1112 aa).

Residues 37 to 104 enclose the SAM domain; that stretch reads LAEIEAKEAC…LNKCAVMKLE (68 aa). Phosphoserine occurs at positions 112, 115, and 155. 4 disordered regions span residues 146-203, 318-350, 405-459, and 512-574; these read SPKQ…APAR, RSISSSTQTSSSSSQSETSSNVSTPSPVTRTRS, PKAL…VSSR, and SDEG…GVGA. The span at 183–193 shows a compositional bias: polar residues; that stretch reads VHSTGSLTTHA. The focal adhesion-targeting (FAT) stretch occupies residues 296-468; that stretch reads QLNCVEISAL…RLSIYDNVPG (173 aa). Composition is skewed to low complexity over residues 320–348 and 409–423; these read ISSSTQTSSSSSQSETSSNVSTPSPVTRT and SNGSFSPSGNNSSVN. Ser343 bears the Phosphoserine mark. Basic and acidic residues predominate over residues 437-446; sequence LRRENSSPKE. Over residues 520–532 the composition is skewed to polar residues; that stretch reads ALDSVSPCPSSPK. Basic and acidic residues predominate over residues 534–544; that stretch reads IHLDVDNDRAT. Positions 547 to 556 are enriched in polar residues; the sequence is DLDSTGNSLN. Positions 635-657 are polybasic cluster (PBR); it reads KHGFSWAVPKFMKRIKVPDYKDR. Residues 662-868 enclose the Rho-GAP domain; the sequence is VPLTVNVQRT…HMIAECKKLF (207 aa). The 208-residue stretch at 898 to 1105 folds into the START domain; that stretch reads CNDDSADYQH…RDSFSHQNTE (208 aa).

In terms of assembly, interacts with EF1A1, facilitates EF1A1 distribution to the membrane periphery and ruffles upon growth factor stimulation and suppresses cell migration. Interacts with tensin TNS1 (via N-terminus); the interaction is decreased by phosphorylation of TNS1. Interacts with TNS3 and PTEN; in resting cells, interacts with TNS3 (via C2 tensin-type domain) but, following growth factor stimulation, TNS3 and PTEN are phosphorylated which leads to weakened interaction with TNS3 and enhanced interaction with PTEN. Interacts (via C-terminus) with tensin TNS4 (via SH2 domain); the interaction is independent of tyrosine phosphorylation of DLC1.

It localises to the cytoplasm. The protein resides in the cell junction. It is found in the focal adhesion. Its subcellular location is the membrane. In terms of biological role, functions as a GTPase-activating protein for the small GTPases RHOA, RHOB, RHOC and CDC42, terminating their downstream signaling. This induces morphological changes and detachment through cytoskeletal reorganization, playing a critical role in biological processes such as cell migration and proliferation. Also functions in vivo as an activator of the phospholipase PLCD1. Active DLC1 increases cell migration velocity but reduces directionality. Required for growth factor-induced epithelial cell migration; in resting cells, interacts with TNS3 while PTEN interacts with the p85 regulatory subunit of the PI3K kinase complex but growth factor stimulation induces phosphorylation of TNS3 and PTEN, causing them to change their binding preference so that PTEN interacts with DLC1 and TNS3 interacts with p85. The PTEN-DLC1 complex translocates to the posterior of migrating cells to activate RHOA while the TNS3-p85 complex translocates to the leading edge of migrating cells to promote RAC1 activation. The sequence is that of Rho GTPase-activating protein 7 (DLC1) from Bos taurus (Bovine).